The following is a 281-amino-acid chain: Phosphatidylglycerol--prolipoprotein diacylglyceryl transferase (281 aa).

7 helical membrane passes run 11 to 31 (IIFTIGPVSARWYGFMYVISF), 57 to 77 (LLYAIFLGSCIGGRIGYIIFY), 89 to 109 (VFYIWEGGMSFHGGLIGAIIV), 121 to 141 (ILEISDFITPLIPFGLGAGRI), 194 to 214 (PTQLYEFFLEGILLFFIIYFF), 222 to 242 (GSISGLFLIFYGLFRIFIEFF), and 255 to 275 (IITMGQILSLPMIIAGLIIMY). Arginine 140 serves as a coordination point for a 1,2-diacyl-sn-glycero-3-phospho-(1'-sn-glycerol).

The protein belongs to the Lgt family.

It is found in the cell inner membrane. It catalyses the reaction L-cysteinyl-[prolipoprotein] + a 1,2-diacyl-sn-glycero-3-phospho-(1'-sn-glycerol) = an S-1,2-diacyl-sn-glyceryl-L-cysteinyl-[prolipoprotein] + sn-glycerol 1-phosphate + H(+). The protein operates within protein modification; lipoprotein biosynthesis (diacylglyceryl transfer). Its function is as follows. Catalyzes the transfer of the diacylglyceryl group from phosphatidylglycerol to the sulfhydryl group of the N-terminal cysteine of a prolipoprotein, the first step in the formation of mature lipoproteins. The polypeptide is Phosphatidylglycerol--prolipoprotein diacylglyceryl transferase (Buchnera aphidicola subsp. Acyrthosiphon pisum (strain Tuc7)).